Reading from the N-terminus, the 41-residue chain is Large ribosomal subunit protein bL36 (41 aa).

Belongs to the bacterial ribosomal protein bL36 family.

This is Large ribosomal subunit protein bL36 from Rhodopseudomonas palustris (strain HaA2).